The chain runs to 470 residues: ATP synthase subunit beta (470 aa).

ATP is bound at residue 155–162 (GGAGVGKT).

Belongs to the ATPase alpha/beta chains family. In terms of assembly, F-type ATPases have 2 components, CF(1) - the catalytic core - and CF(0) - the membrane proton channel. CF(1) has five subunits: alpha(3), beta(3), gamma(1), delta(1), epsilon(1). CF(0) has three main subunits: a(1), b(2) and c(9-12). The alpha and beta chains form an alternating ring which encloses part of the gamma chain. CF(1) is attached to CF(0) by a central stalk formed by the gamma and epsilon chains, while a peripheral stalk is formed by the delta and b chains.

Its subcellular location is the cell membrane. It carries out the reaction ATP + H2O + 4 H(+)(in) = ADP + phosphate + 5 H(+)(out). Functionally, produces ATP from ADP in the presence of a proton gradient across the membrane. The catalytic sites are hosted primarily by the beta subunits. The protein is ATP synthase subunit beta of Pectinatus frisingensis.